Reading from the N-terminus, the 484-residue chain is Polyamine oxidase 3 (484 aa).

Glu47, Arg55, Val236, and Glu423 together coordinate FAD. The short motif at 482–484 is the Microbody targeting signal element; it reads SRL.

It belongs to the flavin monoamine oxidase family. The cofactor is FAD. In terms of tissue distribution, widely expressed.

It localises to the peroxisome. The catalysed reaction is spermine + O2 + H2O = 3-aminopropanal + spermidine + H2O2. The enzyme catalyses N(1)-acetylspermine + O2 + H2O = 3-acetamidopropanal + spermidine + H2O2. It catalyses the reaction norspermine + O2 + H2O = norspermidine + 3-aminopropanal + H2O2. It carries out the reaction spermidine + O2 + H2O = 3-aminopropanal + putrescine + H2O2. The catalysed reaction is thermospermine + O2 + H2O = 3-aminopropanal + spermidine + H2O2. Its pathway is amine and polyamine degradation; spermine degradation. The protein operates within amine and polyamine degradation; spermidine degradation. Its function is as follows. Flavoenzyme involved in polyamine back-conversion. Catalyzes the oxidation of the secondary amino group of polyamines, such as spermine, spermidine and their acetyl derivatives. Substrate preference is spermidine &gt; norspermine &gt; thermospermine &gt; N(1)-acetylspermine &gt; spermine. No activity detected when putrescine is used as substrate. Plays an important role in the regulation of polyamine intracellular concentration. This Oryza sativa subsp. japonica (Rice) protein is Polyamine oxidase 3.